A 458-amino-acid chain; its full sequence is tRNA modification GTPase MnmE (458 aa).

(6S)-5-formyl-5,6,7,8-tetrahydrofolate-binding residues include arginine 22, glutamate 84, and arginine 123. Positions 220-379 (GIATAIIGRP…LEKAIADLFF (160 aa)) constitute a TrmE-type G domain. Asparagine 230 serves as a coordination point for K(+). GTP-binding positions include 230-235 (NVGKSS), 249-255 (TDIAGTT), and 274-277 (DTAG). Serine 234 lines the Mg(2+) pocket. 3 residues coordinate K(+): threonine 249, isoleucine 251, and threonine 254. Threonine 255 provides a ligand contact to Mg(2+). A (6S)-5-formyl-5,6,7,8-tetrahydrofolate-binding site is contributed by lysine 458.

This sequence belongs to the TRAFAC class TrmE-Era-EngA-EngB-Septin-like GTPase superfamily. TrmE GTPase family. In terms of assembly, homodimer. Heterotetramer of two MnmE and two MnmG subunits. It depends on K(+) as a cofactor.

Its subcellular location is the cytoplasm. Functionally, exhibits a very high intrinsic GTPase hydrolysis rate. Involved in the addition of a carboxymethylaminomethyl (cmnm) group at the wobble position (U34) of certain tRNAs, forming tRNA-cmnm(5)s(2)U34. The polypeptide is tRNA modification GTPase MnmE (Bacillus cereus (strain ZK / E33L)).